The primary structure comprises 105 residues: Antimicrobial peptide 1 (105 aa).

The first 26 residues, methionine 1–alanine 26, serve as a signal peptide directing secretion. Cystine bridges form between cysteine 37–cysteine 93, cysteine 47–cysteine 105, and cysteine 49–cysteine 77.

Detected at higher levels in needles and twigs from canker-resistant seedlings than in needles from canker-susceptible plants. During summer, detected on cankered, healthy and marginal bark. During winter, detected at lower levels in cankered bark and bark from the canker margin than in healthy bark (at protein level).

Its subcellular location is the secreted. It is found in the cell wall. Antimicrobial peptide. This chain is Antimicrobial peptide 1, found in Pinus monticola (Western white pine).